A 222-amino-acid polypeptide reads, in one-letter code: Ubiquitin-conjugating enzyme E2 S (222 aa).

At M1 the chain carries N-acetylmethionine. One can recognise a UBC core domain in the interval 11–157; that stretch reads HIIRLVYKEV…ARLLTEIHGG (147 aa). Catalysis depends on C95, which acts as the Glycyl thioester intermediate. A disordered region spans residues 156–222; it reads GGAGGPSGRA…TDKKRALRRL (67 aa). S173 is subject to Phosphoserine. The span at 208 to 222 shows a compositional bias: basic residues; the sequence is AAKKKTDKKRALRRL.

Belongs to the ubiquitin-conjugating enzyme family. As to quaternary structure, component of the APC/C complex, composed of at least 14 distinct subunits that assemble into a complex of at least 19 chains with a combined molecular mass of around 1.2 MDa. Within this complex, directly interacts with ANAPC2 and ANAPC4. Interacts with CDC20, FZR1/CDH1 and VHL. Post-translationally, autoubiquitinated by the APC/C complex during G1, leading to its degradation by the proteasome.

It catalyses the reaction S-ubiquitinyl-[E1 ubiquitin-activating enzyme]-L-cysteine + [E2 ubiquitin-conjugating enzyme]-L-cysteine = [E1 ubiquitin-activating enzyme]-L-cysteine + S-ubiquitinyl-[E2 ubiquitin-conjugating enzyme]-L-cysteine.. Its pathway is protein modification; protein ubiquitination. Accepts ubiquitin from the E1 complex and catalyzes its covalent attachment to other proteins. Catalyzes 'Lys-11'-linked polyubiquitination. Acts as an essential factor of the anaphase promoting complex/cyclosome (APC/C), a cell cycle-regulated ubiquitin ligase that controls progression through mitosis. Acts by specifically elongating 'Lys-11'-linked polyubiquitin chains initiated by the E2 enzyme UBE2C/UBCH10 on APC/C substrates, enhancing the degradation of APC/C substrates by the proteasome and promoting mitotic exit. Also acts by elongating ubiquitin chains initiated by the E2 enzyme UBE2D1/UBCH5 in vitro; it is however unclear whether UBE2D1/UBCH5 acts as an E2 enzyme for the APC/C in vivo. Also involved in ubiquitination and subsequent degradation of VHL, resulting in an accumulation of HIF1A. In vitro able to promote polyubiquitination using all 7 ubiquitin Lys residues, except 'Lys-48'-linked polyubiquitination. The protein is Ubiquitin-conjugating enzyme E2 S (UBE2S) of Homo sapiens (Human).